The primary structure comprises 414 residues: Cell division protein FtsA (414 aa).

This sequence belongs to the FtsA/MreB family. Self-interacts. Interacts with FtsZ.

The protein localises to the cell inner membrane. Its function is as follows. Cell division protein that is involved in the assembly of the Z ring. May serve as a membrane anchor for the Z ring. The protein is Cell division protein FtsA of Neisseria meningitidis serogroup B (strain ATCC BAA-335 / MC58).